We begin with the raw amino-acid sequence, 266 residues long: 15-hydroxyprostaglandin dehydrogenase [NAD(+)] (266 aa).

NAD(+) is bound by residues 12–20 (GAAQGIGRA), 36–37 (DW), 63–65 (CDV), and asparagine 91. Residues serine 138 and glutamine 148 each contribute to the substrate site. The Proton acceptor role is filled by tyrosine 151. NAD(+) is bound by residues 151 to 155 (YCASK) and 186 to 188 (VNT).

It belongs to the short-chain dehydrogenases/reductases (SDR) family. In terms of assembly, homodimer. As to expression, detected in colon epithelium (at protein level).

The protein resides in the cytoplasm. It carries out the reaction prostaglandin E2 + NAD(+) = 15-oxoprostaglandin E2 + NADH + H(+). The enzyme catalyses (15S)-hydroxy-(5Z,8Z,11Z,13E)-eicosatetraenoate + NAD(+) = 15-oxo-(5Z,8Z,11Z,13E)-eicosatetraenoate + NADH + H(+). It catalyses the reaction (11R)-hydroxy-(5Z,8Z,12E,14Z)-eicosatetraenoate + NAD(+) = 11-oxo-(5Z,8Z,12E,14Z)-eicosatetraenoate + NADH + H(+). The catalysed reaction is lipoxin A4 + NAD(+) = 15-oxo-(5S,6R)-dihydroxy-(7E,9E,11Z,13E)-eicosatetraenoate + NADH + H(+). It carries out the reaction 15-oxo-(5S,6R)-dihydroxy-(7E,9E,11Z)-eicosatrienoate + NADH + H(+) = (5S,6R,15S)-trihydroxy-(7E,9E,11Z)-eicosatrienoate + NAD(+). The enzyme catalyses prostaglandin A1 + NAD(+) = 15-oxo-prostaglandin A1 + NADH + H(+). It catalyses the reaction prostaglandin E1 + NAD(+) = 15-oxoprostaglandin E1 + NADH + H(+). The catalysed reaction is 14-hydroxy-(4Z,7Z,10Z,12E,16Z,19Z)-docosahexaenoate + NAD(+) = 14-oxo-(4Z,7Z,10Z,12E,16Z,19Z)-docosahexaenoate + NADH + H(+). It carries out the reaction resolvin E1 + NAD(+) = 18-oxo-resolvin E1 + NADH + H(+). The enzyme catalyses resolvin D1 + NAD(+) = 8-oxoresolvin D1 + NADH + H(+). It catalyses the reaction resolvin D1 + NAD(+) = 17-oxoresolvin D1 + NADH + H(+). The catalysed reaction is resolvin D2 + NAD(+) = 7-oxoresolvin D2 + NADH + H(+). It carries out the reaction resolvin D2 + NAD(+) = 16-oxoresolvin D2 + NADH + H(+). In terms of biological role, catalyzes the NAD-dependent dehydrogenation (oxidation) of a broad array of hydroxylated polyunsaturated fatty acids (mainly eicosanoids and docosanoids, including prostaglandins, lipoxins and resolvins), yielding their corresponding keto (oxo) metabolites. Decreases the levels of the pro-proliferative prostaglandins such as prostaglandin E2 (whose activity is increased in cancer because of an increase in the expression of cyclooxygenase 2) and generates oxo-fatty acid products that can profoundly influence cell function by abrogating pro-inflammatory cytokine expression. Converts resolvins E1, D1 and D2 to their oxo products, which represents a mode of resolvin inactivation. Resolvin E1 plays important roles during the resolution phase of acute inflammation, while resolvins D1 and D2 have a unique role in obesity-induced adipose inflammation. The protein is 15-hydroxyprostaglandin dehydrogenase [NAD(+)] of Homo sapiens (Human).